A 520-amino-acid chain; its full sequence is Anthranilate synthase component 1 (520 aa).

Residues S40, K50, and 291–293 (PYM) each bind L-tryptophan. Chorismate is bound at residue 328–329 (GT). E361 provides a ligand contact to Mg(2+). Chorismate contacts are provided by residues Y449, R469, 483–485 (GAG), and G485. Residue E498 participates in Mg(2+) binding.

The protein belongs to the anthranilate synthase component I family. As to quaternary structure, homodimer. In fact, exists in a monomer-dimer equilibrium in solution, shifted spontaneously in favor of the dimer; the monomer has a reduced activity compared with the dimer. Heterotetramer consisting of two non-identical subunits: a beta subunit (TrpG) and a large alpha subunit (TrpE) (Potential). It depends on Mg(2+) as a cofactor.

The catalysed reaction is chorismate + L-glutamine = anthranilate + pyruvate + L-glutamate + H(+). It functions in the pathway amino-acid biosynthesis; L-tryptophan biosynthesis; L-tryptophan from chorismate: step 1/5. With respect to regulation, cooperatively feedback inhibited by tryptophan. Its function is as follows. Part of a heterotetrameric complex that catalyzes the two-step biosynthesis of anthranilate, an intermediate in the biosynthesis of L-tryptophan. In the first step, the glutamine-binding beta subunit (TrpG) of anthranilate synthase (AS) provides the glutamine amidotransferase activity which generates ammonia as a substrate that, along with chorismate, is used in the second step, catalyzed by the large alpha subunit of AS (TrpE) to produce anthranilate. In the absence of TrpG, TrpE can synthesize anthranilate directly from chorismate and high concentrations of ammonia. In Salmonella typhimurium (strain LT2 / SGSC1412 / ATCC 700720), this protein is Anthranilate synthase component 1 (trpE).